The following is a 214-amino-acid chain: Response regulator GacA (214 aa).

The 117-residue stretch at 3–119 (KVLVVDDHDL…EMVQAIRQVF (117 aa)) folds into the Response regulatory domain. A 4-aspartylphosphate modification is found at Asp-54. The region spanning 143-208 (HDSPFDSLSE…ELALLAVRHG (66 aa)) is the HTH luxR-type domain. The H-T-H motif DNA-binding region spans 167–186 (VQSISDKLCLSPKTVNTYRY).

Its function is as follows. Positively controls the production of the autoinducer N-butyryl-homoserine lactone and the formation of the virulence factors pyocyanine, cyanide, and lipase. The protein is Response regulator GacA (gacA) of Pseudomonas aeruginosa (strain ATCC 15692 / DSM 22644 / CIP 104116 / JCM 14847 / LMG 12228 / 1C / PRS 101 / PAO1).